Here is an 82-residue protein sequence, read N- to C-terminus: Large ribosomal subunit protein bL31B (82 aa).

The protein belongs to the bacterial ribosomal protein bL31 family. Type B subfamily. In terms of assembly, part of the 50S ribosomal subunit.

This is Large ribosomal subunit protein bL31B from Bacillus velezensis (strain DSM 23117 / BGSC 10A6 / LMG 26770 / FZB42) (Bacillus amyloliquefaciens subsp. plantarum).